The sequence spans 355 residues: UDP-N-acetylglucosamine--N-acetylmuramyl-(pentapeptide) pyrophosphoryl-undecaprenol N-acetylglucosamine transferase (355 aa).

UDP-N-acetyl-alpha-D-glucosamine contacts are provided by residues 15-17, N127, R163, S191, I244, 263-268, and Q288; these read TGG and ALTVSE.

This sequence belongs to the glycosyltransferase 28 family. MurG subfamily.

The protein localises to the cell inner membrane. It catalyses the reaction di-trans,octa-cis-undecaprenyl diphospho-N-acetyl-alpha-D-muramoyl-L-alanyl-D-glutamyl-meso-2,6-diaminopimeloyl-D-alanyl-D-alanine + UDP-N-acetyl-alpha-D-glucosamine = di-trans,octa-cis-undecaprenyl diphospho-[N-acetyl-alpha-D-glucosaminyl-(1-&gt;4)]-N-acetyl-alpha-D-muramoyl-L-alanyl-D-glutamyl-meso-2,6-diaminopimeloyl-D-alanyl-D-alanine + UDP + H(+). It participates in cell wall biogenesis; peptidoglycan biosynthesis. Cell wall formation. Catalyzes the transfer of a GlcNAc subunit on undecaprenyl-pyrophosphoryl-MurNAc-pentapeptide (lipid intermediate I) to form undecaprenyl-pyrophosphoryl-MurNAc-(pentapeptide)GlcNAc (lipid intermediate II). This Escherichia coli O157:H7 protein is UDP-N-acetylglucosamine--N-acetylmuramyl-(pentapeptide) pyrophosphoryl-undecaprenol N-acetylglucosamine transferase.